Here is a 187-residue protein sequence, read N- to C-terminus: Ribosome-recycling factor (187 aa).

The protein belongs to the RRF family.

The protein localises to the cytoplasm. Functionally, responsible for the release of ribosomes from messenger RNA at the termination of protein biosynthesis. May increase the efficiency of translation by recycling ribosomes from one round of translation to another. This chain is Ribosome-recycling factor, found in Nitrobacter winogradskyi (strain ATCC 25391 / DSM 10237 / CIP 104748 / NCIMB 11846 / Nb-255).